The primary structure comprises 358 residues: Cyclin-dependent kinase 11 (358 aa).

Positions 52-336 constitute a Protein kinase domain; that stretch reads FKKLYTINEG…ASDALKHPYF (285 aa). ATP-binding positions include 58-66 and Lys-81; that span reads INEGAFGVV. The Proton acceptor role is filled by Asp-176.

It belongs to the protein kinase superfamily. CMGC Ser/Thr protein kinase family. CDC2/CDKX subfamily.

It catalyses the reaction L-seryl-[protein] + ATP = O-phospho-L-seryl-[protein] + ADP + H(+). The enzyme catalyses L-threonyl-[protein] + ATP = O-phospho-L-threonyl-[protein] + ADP + H(+). This is Cyclin-dependent kinase 11 (cdk11) from Dictyostelium discoideum (Social amoeba).